A 222-amino-acid polypeptide reads, in one-letter code: Orotate phosphoribosyltransferase (222 aa).

Lysine 29 contributes to the 5-phospho-alpha-D-ribose 1-diphosphate binding site. Residue 37-38 (FF) coordinates orotate. 5-phospho-alpha-D-ribose 1-diphosphate contacts are provided by residues 75 to 76 (YK), arginine 101, lysine 102, lysine 105, histidine 107, and 126 to 134 (DDVISAGTS). Serine 130 and arginine 158 together coordinate orotate.

The protein belongs to the purine/pyrimidine phosphoribosyltransferase family. PyrE subfamily. In terms of assembly, homodimer. Mg(2+) is required as a cofactor.

The catalysed reaction is orotidine 5'-phosphate + diphosphate = orotate + 5-phospho-alpha-D-ribose 1-diphosphate. It functions in the pathway pyrimidine metabolism; UMP biosynthesis via de novo pathway; UMP from orotate: step 1/2. Its function is as follows. Catalyzes the transfer of a ribosyl phosphate group from 5-phosphoribose 1-diphosphate to orotate, leading to the formation of orotidine monophosphate (OMP). The chain is Orotate phosphoribosyltransferase from Polynucleobacter necessarius subsp. necessarius (strain STIR1).